Here is a 311-residue protein sequence, read N- to C-terminus: Probable manganese-dependent inorganic pyrophosphatase (311 aa).

Mn(2+) is bound by residues H9, D13, D15, D77, H99, and D151.

Belongs to the PPase class C family. Requires Mn(2+) as cofactor.

It is found in the cytoplasm. It catalyses the reaction diphosphate + H2O = 2 phosphate + H(+). This Streptococcus agalactiae serotype III (strain NEM316) protein is Probable manganese-dependent inorganic pyrophosphatase.